Consider the following 299-residue polypeptide: Cancer/testis antigen family 47 member B1 (299 aa).

Residues 1–10 (MSATGDRHPT) show a composition bias toward basic and acidic residues. Disordered stretches follow at residues 1-102 (MSAT…EGNE) and 215-299 (AREP…SKGT). Low complexity-rich tracts occupy residues 20 to 31 (QEGAQAEAAGAG) and 46 to 60 (VPAAEVVGVAGPVEG). The span at 81–101 (AEEDSDIGPATEEEEEEEEGN) shows a compositional bias: acidic residues. Positions 215–238 (AREPAEEAADEKPPEEAAEEKLTE) are enriched in basic and acidic residues. Composition is skewed to acidic residues over residues 239–251 (EATEEPAAEEPTS) and 268–281 (WDEEAQDAAGEEEK). The stretch at 270 to 298 (EEAQDAAGEEEKEQEKEKDVENKVKNSKG) forms a coiled coil. The segment covering 282-293 (EQEKEKDVENKV) has biased composition (basic and acidic residues).

Belongs to the CT47 family.

The polypeptide is Cancer/testis antigen family 47 member B1 (Homo sapiens (Human)).